A 315-amino-acid polypeptide reads, in one-letter code: Malate dehydrogenase (315 aa).

NAD(+)-binding positions include 10–15 and Asp34; that span reads GAGNVG. 2 residues coordinate substrate: Arg85 and Arg91. NAD(+) is bound by residues Asn98 and 121 to 123; that span reads VSN. Asn123 and Arg154 together coordinate substrate. The active-site Proton acceptor is His178.

Belongs to the LDH/MDH superfamily. MDH type 3 family.

It catalyses the reaction (S)-malate + NAD(+) = oxaloacetate + NADH + H(+). Functionally, catalyzes the reversible oxidation of malate to oxaloacetate. The sequence is that of Malate dehydrogenase from Rhodopirellula baltica (strain DSM 10527 / NCIMB 13988 / SH1).